Here is a 196-residue protein sequence, read N- to C-terminus: ATP-dependent Clp protease proteolytic subunit (196 aa).

Ser-96 serves as the catalytic Nucleophile. His-121 is an active-site residue.

Belongs to the peptidase S14 family. Fourteen ClpP subunits assemble into 2 heptameric rings which stack back to back to give a disk-like structure with a central cavity, resembling the structure of eukaryotic proteasomes.

Its subcellular location is the cytoplasm. It carries out the reaction Hydrolysis of proteins to small peptides in the presence of ATP and magnesium. alpha-casein is the usual test substrate. In the absence of ATP, only oligopeptides shorter than five residues are hydrolyzed (such as succinyl-Leu-Tyr-|-NHMec, and Leu-Tyr-Leu-|-Tyr-Trp, in which cleavage of the -Tyr-|-Leu- and -Tyr-|-Trp bonds also occurs).. Cleaves peptides in various proteins in a process that requires ATP hydrolysis. Has a chymotrypsin-like activity. Plays a major role in the degradation of misfolded proteins. The sequence is that of ATP-dependent Clp protease proteolytic subunit from Streptococcus suis (strain 98HAH33).